The sequence spans 322 residues: Elongation factor P--(R)-beta-lysine ligase (322 aa).

72–74 (SPE) is a binding site for substrate. Residues 96–98 (RNN) and Asn106 contribute to the ATP site. Substrate is bound at residue Tyr115. Residue 241 to 242 (EL) coordinates ATP. Glu248 contributes to the substrate binding site. Gly297 contacts ATP.

The protein belongs to the class-II aminoacyl-tRNA synthetase family. EpmA subfamily. As to quaternary structure, homodimer.

It catalyses the reaction D-beta-lysine + L-lysyl-[protein] + ATP = N(6)-((3R)-3,6-diaminohexanoyl)-L-lysyl-[protein] + AMP + diphosphate + H(+). Its function is as follows. With EpmB is involved in the beta-lysylation step of the post-translational modification of translation elongation factor P (EF-P). Catalyzes the ATP-dependent activation of (R)-beta-lysine produced by EpmB, forming a lysyl-adenylate, from which the beta-lysyl moiety is then transferred to the epsilon-amino group of a conserved specific lysine residue in EF-P. The protein is Elongation factor P--(R)-beta-lysine ligase of Buchnera aphidicola subsp. Baizongia pistaciae (strain Bp).